Reading from the N-terminus, the 462-residue chain is NEDD8-activating enzyme E1 catalytic subunit (462 aa).

The residue at position 2 (Ala-2) is an N-acetylalanine. Positions 53–70 (HPDFEPSTESLQFLLDTC) are interaction with UBE2M N-terminus. Residues 100 to 124 (DMDT…GRPK) and 148 to 171 (IQDF…SIIA) contribute to the ATP site. Interaction with UBE2M N-terminus regions lie at residues 157-161 (RQFHI) and 192-217 (PSSI…LPGM). An interaction with NEDD8 region spans residues 227–229 (LYP). Cys-237 (glycyl thioester intermediate) is an active-site residue. Interaction with NAE1 stretches follow at residues 242 to 248 (MPRLPEH) and 292 to 295 (YNIR). The interval 331–338 (IATSAYIP) is interaction with UBE2M N-terminus. The interaction with NEDD8 stretch occupies residues 352-357 (YTYTFE). The interval 368 to 462 (SQLPQNIQFS…QTVLFKLHFT (95 aa)) is interaction with UBE2M core domain.

Belongs to the ubiquitin-activating E1 family. UBA3 subfamily. In terms of assembly, heterodimer of UBA3 and NAE1. Interacts with NEDD8, UBE2F and UBE2M. Binds ESR1 and ESR2 with bound steroid ligand. Interacts with TBATA. Ubiquitously expressed.

The catalysed reaction is ATP + [NEDD8 protein] + [E1 NEDD8-activating enzyme]-L-cysteine = AMP + diphosphate + [E1 NEDD8-activating enzyme]-S-[NEDD8 protein]-yl-L-cysteine.. It participates in protein modification; protein neddylation. Its activity is regulated as follows. Binding of TP53BP2 to the regulatory subunit NAE1 decreases activity. Its function is as follows. Catalytic subunit of the dimeric UBA3-NAE1 E1 enzyme. E1 activates NEDD8 by first adenylating its C-terminal glycine residue with ATP, thereafter linking this residue to the side chain of the catalytic cysteine, yielding a NEDD8-UBA3 thioester and free AMP. E1 finally transfers NEDD8 to the catalytic cysteine of UBE2M. Down-regulates steroid receptor activity. Necessary for cell cycle progression. The protein is NEDD8-activating enzyme E1 catalytic subunit (Uba3) of Rattus norvegicus (Rat).